Here is a 295-residue protein sequence, read N- to C-terminus: Phosphatidylserine decarboxylase proenzyme (295 aa).

Catalysis depends on charge relay system; for autoendoproteolytic cleavage activity residues aspartate 113, histidine 169, and serine 256. Catalysis depends on serine 256, which acts as the Schiff-base intermediate with substrate; via pyruvic acid; for decarboxylase activity. Serine 256 carries the post-translational modification Pyruvic acid (Ser); by autocatalysis.

This sequence belongs to the phosphatidylserine decarboxylase family. PSD-B subfamily. Prokaryotic type II sub-subfamily. As to quaternary structure, heterodimer of a large membrane-associated beta subunit and a small pyruvoyl-containing alpha subunit. Pyruvate is required as a cofactor. Is synthesized initially as an inactive proenzyme. Formation of the active enzyme involves a self-maturation process in which the active site pyruvoyl group is generated from an internal serine residue via an autocatalytic post-translational modification. Two non-identical subunits are generated from the proenzyme in this reaction, and the pyruvate is formed at the N-terminus of the alpha chain, which is derived from the carboxyl end of the proenzyme. The autoendoproteolytic cleavage occurs by a canonical serine protease mechanism, in which the side chain hydroxyl group of the serine supplies its oxygen atom to form the C-terminus of the beta chain, while the remainder of the serine residue undergoes an oxidative deamination to produce ammonia and the pyruvoyl prosthetic group on the alpha chain. During this reaction, the Ser that is part of the protease active site of the proenzyme becomes the pyruvoyl prosthetic group, which constitutes an essential element of the active site of the mature decarboxylase.

Its subcellular location is the cell membrane. The catalysed reaction is a 1,2-diacyl-sn-glycero-3-phospho-L-serine + H(+) = a 1,2-diacyl-sn-glycero-3-phosphoethanolamine + CO2. Its pathway is phospholipid metabolism; phosphatidylethanolamine biosynthesis; phosphatidylethanolamine from CDP-diacylglycerol: step 2/2. Its function is as follows. Catalyzes the formation of phosphatidylethanolamine (PtdEtn) from phosphatidylserine (PtdSer). This is Phosphatidylserine decarboxylase proenzyme from Clostridium botulinum (strain Langeland / NCTC 10281 / Type F).